We begin with the raw amino-acid sequence, 303 residues long: Kanosamine kinase (303 aa).

The protein belongs to the ROK (NagC/XylR) family.

It catalyses the reaction kanosamine + ATP = D-kanosamine 6-phosphate + ADP + H(+). Its pathway is antibiotic biosynthesis; rifamycin B biosynthesis. With respect to regulation, inhibited by Zn(2+), Cu(2+), and Fe(2+). In terms of biological role, involved in the biosynthesis of 3-amino-5-hydroxybenzoate (AHBA), a compound that then serves as the starter unit for the assembly of a polyketide during the biosynthesis of rifamycin B and other ansamycin antibiotics. Catalyzes only the phosphorylation of kanosamine to yield kanosamine 6-phosphate. This Amycolatopsis mediterranei (strain S699) (Nocardia mediterranei) protein is Kanosamine kinase (rifN).